A 1976-amino-acid chain; its full sequence is MAQRTGLEDPERYLFVDRAVIYNPATQADWTAKKLVWIPSERHGFEAASIKEERGDEVMVELAENGKKAMVNKDDIQKMNPPKFSKVEDMAELTCLNEASVLHNLKDRYYSGLIYTYSGLFCVVINPYKNLPIYSENIIEMYRGKKRHEKPPHIYAISESAYRCMLQDRKDQSILCTGESGAGKTENTKKVIQYLAHVASSHKGRKDHNIPGELERQLLQANPILESFGNAKTVKNDNSSRFGKFIRINFDVTGYIVGANIETYLLEKSRAVRQAKDERTFHIFYQLLSGAGEHLKSDLLLEGFNNYRFLSNGYIPIPGQQDKDNFQETMEAMHIMGFSHEEILSMLKVVSSVLQFGNISFKKERNTDQASMPENTVAQKLCHLLGMNVMEFTRAILTPRIKVGRDYVQKAQTKEQADFAVEALAKATYERLFRWLVHRINKALDRTKRQGTSFIGILDIAGFEIFELNSFEQLCINYTNEKLQQLFNHTMFILEQEEYQREGIEWNFIDFGLDLQPCIDLIERPANPPGVLALLDEECWFPKATDKTFVEKLVQEQGSHSKFQKPRQLKDKADFCIIHYAGKVDYKADEWLMKNMDPLNDNVATLLHQSSDRFVAELWKDVDRIVGLDQVTGMTETAFGSAYKTKKGMFRNVGQLYKESLTKLMATLRNTNPNFVRCIIPNHEKRAGKLDPHLVLDQLRCNGVLEGIRICRQGFPNRIVFQEFRQRYEILTPNAIPKGFMDGKQACERMIRALELDPNLYRIGQSKIFFRAGVLAHLEEERDLKITDIIIFFQAVCRGYLARKAFAKKQQQLSALKVLQRNCAAYLKLRHWQWWRVFTKVKPLLQVTRQEEELQAKDEELLKVKEKQTKVEGELEEMERKHQQLLEEKNILAEQLQAETELFAEAEEMRARLAAKKQELEEILHDLESRVEGEEERNQILQNEKKKMQAHIQDLEEQLDEEEGARQKLQLEKVTAEAKIKKMEEEVLLLEDQNSKFIKEKKLMEDRIAECSSQLAEEEEKAKNLAKIRNKQEVMISDLEERLKKEEKTRQELEKAKRKLDGETTDLQDQIAELQAQVDELKVQLTKKEEELQGALARGDDETLHKNNALKVARELQAQIAELQEDFESEKASRNKAEKQKRDLSEELEALKTELEDTLDTTAAQQELRTKREQEVAELKKALEDETKNHEAQIQDMRQRHATALEELSEQLEQAKRFKANLEKNKQGLETDNKELACEVKVLQQVKAESEHKRKKLDAQVQELHAKVSEGDRLRVELAEKANKLQNELDNVSTLLEEAEKKGMKFAKDAAGLESQLQDTQELLQEETRQKLNLSSRIRQLEEEKNSLQEQQEEEEEARKNLEKQVLALQSQLADTKKKVDDDLGTIEGLEEAKKKLLKDVEALSQRLEEKVLAYDKLEKTKNRLQQELDDLTVDLDHQRQIVSNLEKKQKKFDQLLAEEKGISARYAEERDRAEAEAREKETKALSLARALEEALEAKEEFERQNKQLRADMEDLMSSKDDVGKNVHELEKSKRALEQQVEEMRTQLEELEDELQATEDAKLRLEVNMQAMKAQFERDLQTRDEQNEEKKRLLLKQVRELEAELEDERKQRALAVASKKKMEIDLKDLEAQIEAANKARDEVIKQLRKLQAQMKDYQRELEEARASRDEIFAQSKESEKKLKSLEAEILQLQEELASSERARRHAEQERDELADEIANSASGKSALLDEKRRLEARIAQLEEELEEEQSNMELLNDRFRKTTLQVDTLNTELAAERSAAQKSDNARQQLERQNKELKAKLQELEGAVKSKFKATISALEAKIGQLEEQLEQEAKERAAANKLVRRTEKKLKEIFMQVEDERRHADQYKEQMEKANARMKQLKRQLEEAEEEATRANASRRKLQRELDDATEANEGLSREVSTLKNRLRRGGPISFSSSRSGRRQLHIEGASLELSDDDTESKTSDVNETQPPQSE.

Omega-N-methylarginine is present on arginine 18. In terms of domain architecture, Myosin N-terminal SH3-like spans 31-81 (TAKKLVWIPSERHGFEAASIKEERGDEVMVELAENGKKAMVNKDDIQKMNP). The region spanning 85–783 (SKVEDMAELT…VLAHLEEERD (699 aa)) is the Myosin motor domain. 178 to 185 (GESGAGKT) provides a ligand contact to ATP. Lysine 442 carries the N6-acetyllysine modification. The actin-binding stretch occupies residues 661–683 (LTKLMATLRNTNPNFVRCIIPNH). Positions 786–815 (ITDIIIFFQAVCRGYLARKAFAKKQQQLSA) constitute an IQ domain. The stretch at 845-1976 (LQVTRQEEEL…VNETQPPQSE (1132 aa)) forms a coiled coil. Positions 1125 to 1175 (EDFESEKASRNKAEKQKRDLSEELEALKTELEDTLDTTAAQQELRTKREQE) are disordered. Positions 1129–1155 (SEKASRNKAEKQKRDLSEELEALKTEL) are enriched in basic and acidic residues. Serine 1145 carries the post-translational modification Phosphoserine. N6-acetyllysine is present on residues lysine 1241, lysine 1301, and lysine 1645. Disordered regions lie at residues 1697 to 1718 (ASSE…DEIA) and 1874 to 1976 (KANA…PQSE). Over residues 1698–1708 (SSERARRHAEQ) the composition is skewed to basic and acidic residues. Arginine 1930 bears the Omega-N-methylarginine mark. A phosphoserine mark is found at serine 1935, serine 1937, serine 1938, and serine 1939. At arginine 1940 the chain carries Omega-N-methylarginine. A phosphoserine mark is found at serine 1952 and serine 1956. Residue threonine 1960 is modified to Phosphothreonine. The span at 1967–1976 (VNETQPPQSE) shows a compositional bias: polar residues. Serine 1975 is subject to Phosphoserine.

Belongs to the TRAFAC class myosin-kinesin ATPase superfamily. Myosin family. In terms of assembly, myosin is a hexameric protein that consists of 2 heavy chain subunits (MHC), 2 alkali light chain subunits (MLC) and 2 regulatory light chain subunits (MLC-2). Interacts with PLEKHG6. Interacts with ECPAS. Interacts with KIF26B. Interacts with LARP6. Interacts with MCC. Interacts with CFAP95. Phosphorylated by ABL2.

The protein localises to the cell projection. Its subcellular location is the lamellipodium. Its function is as follows. Involved with LARP6 in the stabilization of type I collagen mRNAs for CO1A1 and CO1A2. During cell spreading, plays an important role in cytoskeleton reorganization, focal contacts formation (in the central part but not the margins of spreading cells), and lamellipodial extension; this function is mechanically antagonized by MYH9. Cellular myosin that appears to play a role in cytokinesis, cell shape, and specialized functions such as secretion and capping. This is Myosin-10 (Myh10) from Rattus norvegicus (Rat).